We begin with the raw amino-acid sequence, 225 residues long: MNSIEFPLFHRTTQNSVISTTLNDLSNWSRLSSLWPLLYGTSCCFIEFASLIGSRFDFDRYGLVPRSSPRQADLILTAGTVTMKMAPSLVRLYEQMPEPKYVIAMGACTITGGMFSTDSYSTVRGVDKLIPVDVYLPGCPPKPEAIIDAITKLRKKISREIYPDRIMSQRENRCFTTNHKFQVGHSIHTGNYDQGFLYQPPSTSEIPPETFFKYKSSVSSHELVN.

[4Fe-4S] cluster is bound by residues C43, C44, C108, and C139.

This sequence belongs to the complex I 20 kDa subunit family. As to quaternary structure, NDH is composed of at least 16 different subunits, 5 of which are encoded in the nucleus. [4Fe-4S] cluster is required as a cofactor.

The protein localises to the plastid. Its subcellular location is the chloroplast thylakoid membrane. The catalysed reaction is a plastoquinone + NADH + (n+1) H(+)(in) = a plastoquinol + NAD(+) + n H(+)(out). It catalyses the reaction a plastoquinone + NADPH + (n+1) H(+)(in) = a plastoquinol + NADP(+) + n H(+)(out). Functionally, NDH shuttles electrons from NAD(P)H:plastoquinone, via FMN and iron-sulfur (Fe-S) centers, to quinones in the photosynthetic chain and possibly in a chloroplast respiratory chain. The immediate electron acceptor for the enzyme in this species is believed to be plastoquinone. Couples the redox reaction to proton translocation, and thus conserves the redox energy in a proton gradient. This chain is NAD(P)H-quinone oxidoreductase subunit K, chloroplastic, found in Helianthus annuus (Common sunflower).